A 240-amino-acid chain; its full sequence is Probable transcriptional regulatory protein SO_3401 (240 aa).

The protein belongs to the TACO1 family.

Its subcellular location is the cytoplasm. In Shewanella oneidensis (strain ATCC 700550 / JCM 31522 / CIP 106686 / LMG 19005 / NCIMB 14063 / MR-1), this protein is Probable transcriptional regulatory protein SO_3401.